Reading from the N-terminus, the 408-residue chain is MNDTVKKPTGGRGDDPLPAGAALSAVAPHEPVSVVLAGGGTAGHVEPAMAVADALKALDPNVRITSLGTARGLETRLVPERGYDLELITPVPLPRKPTGDLARLPSRVWRAVRETRAVLHAVDADVVIGFGGYVALPAYLAARGVSPRKPRVPVVIHEANASAGLANRVGARTAQRVLSAVADCGLPGAEVVGVPVREAITSLDRAAVRAEARRHFGFADDARVLLVFGGSQGAASLNRAVSGAAAQLAAAGVSVLHAHGPKNTLDLREPQPGDPPYVAVPYLDRMDLAYAAADLVICRSGAMTVAEVSAVGLPAIYVPLPIGNGEQRLNALPVVNAGGGMVVADADLTPELVAREVAGLVGDPPRLAAMTTAAARVGHPDAARRVAQAALDIGRTARRARGATGGRP.

Residues 1–20 are disordered; that stretch reads MNDTVKKPTGGRGDDPLPAG. UDP-N-acetyl-alpha-D-glucosamine-binding positions include 41 to 43, Asn-160, Arg-197, Ser-231, and Gln-327; that span reads TAG.

It belongs to the glycosyltransferase 28 family. MurG subfamily.

The protein resides in the cell membrane. It catalyses the reaction di-trans,octa-cis-undecaprenyl diphospho-N-acetyl-alpha-D-muramoyl-L-alanyl-D-glutamyl-meso-2,6-diaminopimeloyl-D-alanyl-D-alanine + UDP-N-acetyl-alpha-D-glucosamine = di-trans,octa-cis-undecaprenyl diphospho-[N-acetyl-alpha-D-glucosaminyl-(1-&gt;4)]-N-acetyl-alpha-D-muramoyl-L-alanyl-D-glutamyl-meso-2,6-diaminopimeloyl-D-alanyl-D-alanine + UDP + H(+). The protein operates within cell wall biogenesis; peptidoglycan biosynthesis. Functionally, cell wall formation. Catalyzes the transfer of a GlcNAc subunit on undecaprenyl-pyrophosphoryl-MurNAc-pentapeptide (lipid intermediate I) to form undecaprenyl-pyrophosphoryl-MurNAc-(pentapeptide)GlcNAc (lipid intermediate II). This is UDP-N-acetylglucosamine--N-acetylmuramyl-(pentapeptide) pyrophosphoryl-undecaprenol N-acetylglucosamine transferase from Mycobacterium avium (strain 104).